A 767-amino-acid polypeptide reads, in one-letter code: Syn-copalyl diphosphate synthase (767 aa).

The disordered stretch occupies residues 45–74 (GPMLISKSPPYPASEETREWEAEGQHEHTD). A compositionally biased stretch (basic and acidic residues) spans 59–74 (EETREWEAEGQHEHTD). Lys-233 contacts substrate. Mg(2+) contacts are provided by Asp-365 and Asp-367. Positions 365-368 (DIDD) match the DXDD motif motif. Lys-453 is a binding site for substrate.

Requires Mg(2+) as cofactor.

The catalysed reaction is (2E,6E,10E)-geranylgeranyl diphosphate = 9alpha-copalyl diphosphate. In terms of biological role, catalyzes the conversion of geranylgeranyl diphosphate to the phytoalexin precursor syn-copalyl diphosphate. The polypeptide is Syn-copalyl diphosphate synthase (CPS4) (Oryza sativa subsp. indica (Rice)).